We begin with the raw amino-acid sequence, 654 residues long: Macrolide export ATP-binding/permease protein MacB (654 aa).

One can recognise an ABC transporter domain in the interval 6-244 (IEISALNRIF…TSASSATDAA (239 aa)). Residue 42 to 49 (GTSGSGKS) coordinates ATP. 4 consecutive transmembrane segments (helical) span residues 279–299 (LLTM…VAIG), 534–554 (IAVI…LVSV), 584–604 (MVCL…GALF), and 617–637 (VTAI…FGFL).

The protein belongs to the ABC transporter superfamily. Macrolide exporter (TC 3.A.1.122) family. Homodimer. Part of the tripartite efflux system MacAB-TolC, which is composed of an inner membrane transporter, MacB, a periplasmic membrane fusion protein, MacA, and an outer membrane component, TolC. The complex forms a large protein conduit and can translocate molecules across both the inner and outer membranes. Interacts with MacA.

The protein localises to the cell inner membrane. In terms of biological role, part of the tripartite efflux system MacAB-TolC. MacB is a non-canonical ABC transporter that contains transmembrane domains (TMD), which form a pore in the inner membrane, and an ATP-binding domain (NBD), which is responsible for energy generation. Confers resistance against macrolides. This is Macrolide export ATP-binding/permease protein MacB from Hahella chejuensis (strain KCTC 2396).